The primary structure comprises 266 residues: MVLNWRGVKSRLYSGKRRIDGRNKGLIAIRARGGALKRKYRYIEHYKQKWMDKWLFVMRIEYDPNRSAHIALCSILKEGIYFYVISVAKLEVGSLIITSNLKQGILQVGYTTKIKNIPEGILINNIELMENSGSKLSRAAGTSSLIIKQYNKKYSLVKLSSKECRLISNECYATIGTVSNIEKKIKKSKKASESRKKGIRPIVRGLAMNPVDHPHGGRTKGGMHWKSFSGKLAYNISSRKKTKMSSRYIIIGHRKQRLMDKKKKNG.

The protein belongs to the universal ribosomal protein uL2 family.

The protein localises to the mitochondrion. This Dictyostelium citrinum (Slime mold) protein is Large ribosomal subunit protein uL2m (mrpl2).